The chain runs to 94 residues: Putative regulatory protein LEPBI_I0950 (94 aa).

The protein belongs to the RemA family.

This is Putative regulatory protein LEPBI_I0950 from Leptospira biflexa serovar Patoc (strain Patoc 1 / ATCC 23582 / Paris).